A 313-amino-acid polypeptide reads, in one-letter code: MKDVYGRELEDLRITLTHACNFTCFFCHMEGENDGDSLLSADQISLVAQIGMEFGIRTVKLTGGEPTLRRDLPEIISKLKEVGIKEVSMTTNGYLLKELAGKLKDAGLDRVNISLHSIDPVIFKEVTGVNVLSKVVEGIEEAKKVGLRPLKLNYVVTRKNAKGIFEFINFASSSNIDEIHLIELHPVGLGKEAFYTHVDMSDIEGRLNEDCTLVEIRNKHKRPRYKCGNLVVEVVKPYANPIFCSGCNRIRLTVDGKLKTCLYRDDKIIDISDIIKSSYSTEEKEELLREAYRLAILIREPNFRFRYETSKTG.

Residues 4 to 224 (VYGRELEDLR…EIRNKHKRPR (221 aa)) form the Radical SAM core domain. R13 serves as a coordination point for GTP. 3 residues coordinate [4Fe-4S] cluster: C20, C24, and C27. K60 contributes to the GTP binding site. G64 lines the S-adenosyl-L-methionine pocket. Position 90 (T90) interacts with GTP. S114 lines the S-adenosyl-L-methionine pocket. Position 151 (K151) interacts with GTP. Residues C244 and C247 each coordinate [4Fe-4S] cluster. 249–251 (RIR) provides a ligand contact to GTP. C261 contributes to the [4Fe-4S] cluster binding site.

This sequence belongs to the radical SAM superfamily. MoaA family. The cofactor is [4Fe-4S] cluster.

It carries out the reaction GTP + AH2 + S-adenosyl-L-methionine = (8S)-3',8-cyclo-7,8-dihydroguanosine 5'-triphosphate + 5'-deoxyadenosine + L-methionine + A + H(+). It functions in the pathway cofactor biosynthesis; molybdopterin biosynthesis. Its function is as follows. Catalyzes the cyclization of GTP to (8S)-3',8-cyclo-7,8-dihydroguanosine 5'-triphosphate. The polypeptide is Probable GTP 3',8-cyclase (Sulfolobus acidocaldarius (strain ATCC 33909 / DSM 639 / JCM 8929 / NBRC 15157 / NCIMB 11770)).